The sequence spans 91 residues: Acylphosphatase (91 aa).

The region spanning Cys5–Arg91 is the Acylphosphatase-like domain. Residues Arg20 and Asn38 contribute to the active site.

This sequence belongs to the acylphosphatase family.

The enzyme catalyses an acyl phosphate + H2O = a carboxylate + phosphate + H(+). The polypeptide is Acylphosphatase (acyP) (Pseudomonas aeruginosa (strain ATCC 15692 / DSM 22644 / CIP 104116 / JCM 14847 / LMG 12228 / 1C / PRS 101 / PAO1)).